A 167-amino-acid chain; its full sequence is Small ribosomal subunit protein uS5 (167 aa).

Positions 12-75 constitute an S5 DRBM domain; the sequence is LQEKLVQVNR…DAARKNMITV (64 aa).

This sequence belongs to the universal ribosomal protein uS5 family. Part of the 30S ribosomal subunit. Contacts proteins S4 and S8.

Its function is as follows. With S4 and S12 plays an important role in translational accuracy. Functionally, located at the back of the 30S subunit body where it stabilizes the conformation of the head with respect to the body. The polypeptide is Small ribosomal subunit protein uS5 (Hahella chejuensis (strain KCTC 2396)).